The primary structure comprises 153 residues: Actin-related protein 2/3 complex subunit 5-like protein (153 aa).

Phosphoserine is present on Ser64.

The protein belongs to the ARPC5 family. May be a component of the Arp2/3 complex in which it may replace ARPC5.

It is found in the cytoplasm. The protein resides in the cytoskeleton. The protein localises to the cell projection. In terms of biological role, may function as component of the Arp2/3 complex which is involved in regulation of actin polymerization and together with an activating nucleation-promoting factor (NPF) mediates the formation of branched actin networks. This Bos taurus (Bovine) protein is Actin-related protein 2/3 complex subunit 5-like protein (ARPC5L).